The sequence spans 433 residues: Transcription factor elt-2 (433 aa).

2 disordered regions span residues 1–47 (MDNN…ELPR) and 194–235 (GQPP…RQGL). Polar residues predominate over residues 27-43 (PTQNMDPPEQNNESQLS). Over residues 211–234 (AKQSSKKSSSSNRGSNGSASRRQG) the composition is skewed to low complexity. The segment at 237 to 261 (CSNCNGTNTTLWRRNAEGDPVCNAC) adopts a GATA-type zinc-finger fold. The tract at residues 275–332 (SMKKEGALQTRKRKSKSGDSSTPSTSRARERKFERASSSTEKAQRSSNRRAGSAKADR) is disordered. A compositionally biased stretch (polar residues) spans 310 to 324 (ASSSTEKAQRSSNRR).

As to quaternary structure, interacts with lag-1. Interacts with pha-4. Interacts with rpt-6. In terms of processing, may be ubiquitinated in response to infection by B.pseudomallei. In terms of tissue distribution, expressed in the intestine.

It is found in the nucleus. Its function is as follows. Transcriptional activator that binds to the consensus sequence 5'-[AT]GATA[AG]-3'. Predominantly directs the transcription of intestinal genes such as ges-1, cpr-6, pho-1, ftn-1, vit-2 and lev-11, and itself. Required for gut-specific differentiation, specifically acting with the GATA region-binding transcription factor elt-7 to control normal gene expression and promote normal formation of the intestine. Regulates intestinal gene expression in response to hypoxia to promote longevity. Modulation of longevity may, in part, be the result of regulation of expression of daf-16 isoforms d and f in the intestine. Regulates tissue specific gene expression at basal levels and in response to bacterial infection in the intestine to control innate immunity. Plays a role in the induction of metal-responsive genes, activating gene expression from zinc-activated promoters and iron-dependent promoters and enhancers. May regulate the expression of genes that control sensitivity to oxidative stress, in a mab-3-dependent manner, and osmotic stress, in conjunction with the GATA region-binding transcription factor elt-3. May play a role in sphingolipid signaling by regulating the expression of the sphingosine-1-phosphate degrading enzyme, sphingosine-1-phosphate lyase. May act with the Notch signaling pathway to promote endodermal gene expression. Has a protective role in response to infection by Gram-negative bacteria such as S.enterica, E.coli, P.aeruginosa and B.pseudomallei, Gram-positive bacterium E.faecalis and fungal pathogen C.neoformans. An association with the 26S proteasome regulatory subunit rpt-6, in part, controls gene expression in response to infection by P.aeruginosa. Regulates gene expression during the recovery phase following a bacterial infection. May act with p38-activated transcription factors to control p38 gene induction in response to bacterial infection. Controls lysosome formation in the intestine by controlling lysosomal gene expression. This Caenorhabditis elegans protein is Transcription factor elt-2.